The following is a 731-amino-acid chain: Catalase-peroxidase (731 aa).

A cross-link (tryptophyl-tyrosyl-methioninium (Trp-Tyr) (with M-254)) is located at residues 98 to 227; it reads WHAAGTYRTA…LAAIQMGLIY (130 aa). His99 serves as the catalytic Proton acceptor. The tryptophyl-tyrosyl-methioninium (Tyr-Met) (with W-98) cross-link spans 227 to 254; it reads YVNPEGPQGNPHDDEGMARDMKETFKRM. Residue His269 participates in heme b binding.

It belongs to the peroxidase family. Peroxidase/catalase subfamily. As to quaternary structure, homodimer or homotetramer. Heme b is required as a cofactor. Post-translationally, formation of the three residue Trp-Tyr-Met cross-link is important for the catalase, but not the peroxidase activity of the enzyme.

The catalysed reaction is H2O2 + AH2 = A + 2 H2O. It catalyses the reaction 2 H2O2 = O2 + 2 H2O. Bifunctional enzyme with both catalase and broad-spectrum peroxidase activity. This Sphingopyxis alaskensis (strain DSM 13593 / LMG 18877 / RB2256) (Sphingomonas alaskensis) protein is Catalase-peroxidase.